The primary structure comprises 395 residues: Elongation factor Tu (395 aa).

The tr-type G domain maps to 10–204 (KPHVNIGTIG…TVDSYIPEPA (195 aa)). The G1 stretch occupies residues 19–26 (GHVDHGKT). 19 to 26 (GHVDHGKT) is a binding site for GTP. Thr-26 provides a ligand contact to Mg(2+). Positions 60–64 (GITIN) are G2. The tract at residues 81–84 (DAPG) is G3. Residues 81 to 85 (DAPGH) and 136 to 139 (NKTD) each bind GTP. The tract at residues 136 to 139 (NKTD) is G4. The interval 174–176 (SAL) is G5.

Belongs to the TRAFAC class translation factor GTPase superfamily. Classic translation factor GTPase family. EF-Tu/EF-1A subfamily. In terms of assembly, monomer.

The protein localises to the cytoplasm. It catalyses the reaction GTP + H2O = GDP + phosphate + H(+). Its function is as follows. GTP hydrolase that promotes the GTP-dependent binding of aminoacyl-tRNA to the A-site of ribosomes during protein biosynthesis. This chain is Elongation factor Tu, found in Leuconostoc mesenteroides subsp. mesenteroides (strain ATCC 8293 / DSM 20343 / BCRC 11652 / CCM 1803 / JCM 6124 / NCDO 523 / NBRC 100496 / NCIMB 8023 / NCTC 12954 / NRRL B-1118 / 37Y).